The sequence spans 787 residues: Protocadherin beta-15 (787 aa).

The N-terminal stretch at 1-26 (MEPAGERFPEQRQVLILLLLLEVTLA) is a signal peptide. Residues 27–690 (GWEPRRYSVM…AQADSLTVYL (664 aa)) lie on the Extracellular side of the membrane. 5 Cadherin domains span residues 35–133 (VMEE…SPEF), 138–242 (MTLK…APEF), 247–347 (YEVQ…FPEL), 352–451 (LTSP…APAF), and 456–561 (YTLF…SPFV). Asn418 carries an N-linked (GlcNAc...) asparagine glycan. N-linked (GlcNAc...) asparagine glycosylation occurs at Asn567. Positions 568–671 (GSAPCTELVP…LVDGFSQPYL (104 aa)) constitute a Cadherin 6 domain. The chain crosses the membrane as a helical span at residues 691-711 (VVALASVSSLFLFSVFLFVAV). The Cytoplasmic portion of the chain corresponds to 712–787 (RLCRRSRAAS…DSRRKSEFLE (76 aa)).

It localises to the cell membrane. In terms of biological role, potential calcium-dependent cell-adhesion protein. May be involved in the establishment and maintenance of specific neuronal connections in the brain. This is Protocadherin beta-15 (PCDHB15) from Homo sapiens (Human).